The following is a 109-amino-acid chain: ATPase inhibitor mai-2, mitochondrial (109 aa).

Disordered stretches follow at residues 18–39 (FSAG…SIRD) and 73–109 (EEVK…LGKE). Residues 21–35 (GGHGDGAGRGGGSGG) are compositionally biased toward gly residues. Positions 55–109 (YFYKKQKAQLQELREHIQEEVKHHEGQLENHKKVLERHQQRISEIEAQERALGKE) form a coiled coil.

The protein belongs to the ATPase inhibitor family.

The protein resides in the mitochondrion. Functionally, thought to be a regulatory component of the ATP-synthesizing complex in the mitochondria. Activity is pH dependent. The polypeptide is ATPase inhibitor mai-2, mitochondrial (mai-2) (Caenorhabditis elegans).